The sequence spans 595 residues: Chaperone protein HscA homolog (595 aa).

It belongs to the heat shock protein 70 family.

In terms of biological role, chaperone involved in the maturation of iron-sulfur cluster-containing proteins. Has a low intrinsic ATPase activity which is markedly stimulated by HscB. In Rickettsia conorii (strain ATCC VR-613 / Malish 7), this protein is Chaperone protein HscA homolog.